The primary structure comprises 985 residues: Regulator of telomere elongation helicase 1 homolog (985 aa).

In terms of domain architecture, Helicase ATP-binding spans 7-303 (AGIPVHFPFE…QDMGGDEPKD (297 aa)). 42–49 (SPTGTGKT) serves as a coordination point for ATP. Residues Cys-146, Cys-164, Cys-173, and Cys-209 each coordinate [4Fe-4S] cluster. The DEAH box signature appears at 252–255 (DEAH). The tract at residues 858 to 884 (GSSGMVKIHKRERSSPTQPESSSQVSK) is disordered. Residues 872 to 882 (SPTQPESSSQV) are compositionally biased toward polar residues. The residue at position 874 (Thr-874) is a Phosphothreonine.

The protein belongs to the helicase family. RAD3/XPD subfamily.

It is found in the nucleus. The catalysed reaction is ATP + H2O = ADP + phosphate + H(+). A probable ATP-dependent DNA helicase implicated in DNA repair and the maintenance of genomic stability. Acts as an anti-recombinase to counteract toxic recombination and limit crossover during meiosis. Regulates meiotic recombination and crossover homeostasis by physically dissociating strand invasion events and thereby promotes noncrossover repair by meiotic synthesis dependent strand annealing (SDSA) as well as disassembly of D loop recombination intermediates. The chain is Regulator of telomere elongation helicase 1 homolog from Drosophila yakuba (Fruit fly).